The chain runs to 39 residues: Fructose 5-dehydrogenase [NADP(+)] (39 aa).

The enzyme catalyses D-fructose + NADP(+) = 5-dehydro-D-fructose + NADPH + H(+). In Erwinia citreus, this protein is Fructose 5-dehydrogenase [NADP(+)].